A 306-amino-acid polypeptide reads, in one-letter code: Curved DNA-binding protein (306 aa).

The J domain maps to 5-69; that stretch reads DYYAIMGVKP…QRRAEYDQMW (65 aa).

The protein resides in the cytoplasm. It is found in the nucleoid. Its function is as follows. DNA-binding protein that preferentially recognizes a curved DNA sequence. It is probably a functional analog of DnaJ; displays overlapping activities with DnaJ, but functions under different conditions, probably acting as a molecular chaperone in an adaptive response to environmental stresses other than heat shock. Lacks autonomous chaperone activity; binds native substrates and targets them for recognition by DnaK. Its activity is inhibited by the binding of CbpM. The protein is Curved DNA-binding protein of Shigella dysenteriae serotype 1 (strain Sd197).